The primary structure comprises 479 residues: Aspartyl/glutamyl-tRNA(Asn/Gln) amidotransferase subunit B (479 aa).

The protein belongs to the GatB/GatE family. GatB subfamily. As to quaternary structure, heterotrimer of A, B and C subunits.

The enzyme catalyses L-glutamyl-tRNA(Gln) + L-glutamine + ATP + H2O = L-glutaminyl-tRNA(Gln) + L-glutamate + ADP + phosphate + H(+). It carries out the reaction L-aspartyl-tRNA(Asn) + L-glutamine + ATP + H2O = L-asparaginyl-tRNA(Asn) + L-glutamate + ADP + phosphate + 2 H(+). Functionally, allows the formation of correctly charged Asn-tRNA(Asn) or Gln-tRNA(Gln) through the transamidation of misacylated Asp-tRNA(Asn) or Glu-tRNA(Gln) in organisms which lack either or both of asparaginyl-tRNA or glutaminyl-tRNA synthetases. The reaction takes place in the presence of glutamine and ATP through an activated phospho-Asp-tRNA(Asn) or phospho-Glu-tRNA(Gln). This Streptococcus pyogenes serotype M28 (strain MGAS6180) protein is Aspartyl/glutamyl-tRNA(Asn/Gln) amidotransferase subunit B.